A 524-amino-acid chain; its full sequence is Excitatory amino acid transporter 3 (524 aa).

Residues 1 to 18 (MGKPARKGCDSKRFLKNN) lie on the Cytoplasmic side of the membrane. The chain crosses the membrane as a helical span at residues 19–38 (WLLLSTVVAVVLGIVIGVLV). Over 39–61 (REYSNLSTLDKFYFAFPGEILMR) the chain is Extracellular. N43 carries an N-linked (GlcNAc...) asparagine glycan. The helical transmembrane segment at 62-82 (MLKLVILPLIVSSMITGVAAL) threads the bilayer. Residues 83–93 (DSNVSGKIGLR) lie on the Cytoplasmic side of the membrane. The helical transmembrane segment at 94–114 (AVLYYFCTTIIAVILGIVLVV) threads the bilayer. Residues Y98, T101, and T102 each contribute to the Na(+) site. At 115-205 (SIKPGVTQKV…RTKEYRVVGL (91 aa)) the chain is on the extracellular side. Residues N178 and N195 are each glycosylated (N-linked (GlcNAc...) asparagine). Residues 206–229 (YSDGINVLGLIVFCLVFGLVIGKM) traverse the membrane as a helical segment. Residues 230–238 (GEKGQILVD) are Cytoplasmic-facing. Residues 239 to 266 (FFNALSDATMKIVQIIMCYMPLGILFLI) traverse the membrane as a helical segment. Over 267–286 (AGKIIEVEDWEIFRKLGLYM) the chain is Extracellular. Residues 287-308 (VTVLSGLAIHSIVILPLIYFIV) form a helical membrane-spanning segment. Residues 309–313 (VRKNP) are Cytoplasmic-facing. An intramembrane region (discontinuously helical) is located at residues 314–344 (FRFAMGMTQALLTALMISSSSATLPVTFRCA). L-aspartate-binding residues include S331 and S333. Residues 345–353 (EEKNRVDKR) lie on the Cytoplasmic side of the membrane. Residues 354–380 (ITRFVLPVGATINMDGTALYEAVAAVF) traverse the membrane as a helical segment. Na(+) contacts are provided by G362, T364, N366, and D368. T370 contacts L-aspartate. At 381-393 (IAQLNDMDLSIGQ) the chain is on the extracellular side. Residues 394–427 (IITISVTATAASIGAAGVPQAGLVTMVIVLSAVG) constitute an intramembrane region (discontinuously helical). 3 residues coordinate Na(+): S405, I406, and A408. V411 serves as a coordination point for L-aspartate. At 428–440 (LPAEDVTLIIAVD) the chain is on the extracellular side. The helical transmembrane segment at 441-462 (WLLDRFRTVVNVLGDAFGTGIV) threads the bilayer. Positions 447, 448, and 451 each coordinate L-aspartate. Positions 451 and 455 each coordinate Na(+). Residues 463-524 (EKLSKKELEQ…TISFTQTSQF (62 aa)) are Cytoplasmic-facing. A phosphoserine mark is found at S517 and S522.

It belongs to the dicarboxylate/amino acid:cation symporter (DAACS) (TC 2.A.23) family. SLC1A1 subfamily. As to quaternary structure, homotrimer. Interacts with ARL6IP5. Interacts with RTN2 (via N-terminus); the interaction promotes cell surface expression of SLC1A1. Interacts with SORCS2; this interaction is important for normal expression at the cell membrane. In terms of tissue distribution, brain, but also small intestine, kidney, liver and heart.

The protein resides in the cell membrane. Its subcellular location is the apical cell membrane. The protein localises to the synapse. It is found in the synaptosome. It localises to the early endosome membrane. The protein resides in the late endosome membrane. Its subcellular location is the recycling endosome membrane. The enzyme catalyses K(+)(in) + L-glutamate(out) + 3 Na(+)(out) + H(+)(out) = K(+)(out) + L-glutamate(in) + 3 Na(+)(in) + H(+)(in). The catalysed reaction is K(+)(in) + L-aspartate(out) + 3 Na(+)(out) + H(+)(out) = K(+)(out) + L-aspartate(in) + 3 Na(+)(in) + H(+)(in). It carries out the reaction D-aspartate(out) + K(+)(in) + 3 Na(+)(out) + H(+)(out) = D-aspartate(in) + K(+)(out) + 3 Na(+)(in) + H(+)(in). It catalyses the reaction K(+)(in) + L-cysteine(out) + 3 Na(+)(out) + H(+)(out) = K(+)(out) + L-cysteine(in) + 3 Na(+)(in) + H(+)(in). Sodium-dependent, high-affinity amino acid transporter that mediates the uptake of L-glutamate and also L-aspartate and D-aspartate. Can also transport L-cysteine. Functions as a symporter that transports one amino acid molecule together with two or three Na(+) ions and one proton, in parallel with the counter-transport of one K(+) ion. Mediates Cl(-) flux that is not coupled to amino acid transport; this avoids the accumulation of negative charges due to aspartate and Na(+) symport. Plays an important role in L-glutamate and L-aspartate reabsorption in renal tubuli. Plays a redundant role in the rapid removal of released glutamate from the synaptic cleft, which is essential for terminating the postsynaptic action of glutamate. Contributes to glutathione biosynthesis and protection against oxidative stress via its role in L-glutamate and L-cysteine transport. Negatively regulated by ARL6IP5. The protein is Excitatory amino acid transporter 3 (SLC1A1) of Oryctolagus cuniculus (Rabbit).